The sequence spans 257 residues: MLAVLSPAKRLAARPALDLPADLAPSEPRLQDQADALARVARDLTAADLRRLMHISEPLARLNVARFAEFHEARNAAVPAVALFDGDTYAGLEARTMDADALRWAQERICILSGLYGLLRPLDRIQPHRLEMGTRLATERGVTLYDFWGDRIAEALNTRAAETGARVLVNCASVEYFTAADRAALKLPVITPTFLEERNGERKIVSFWAKRARGAMARFIAENRLNDPADLRAFRAGGYAYEPDLSTDERPVFLRAG.

Belongs to the UPF0246 family.

In Cereibacter sphaeroides (strain KD131 / KCTC 12085) (Rhodobacter sphaeroides), this protein is UPF0246 protein RSKD131_2757.